A 226-amino-acid chain; its full sequence is Urease accessory protein UreF (226 aa).

It belongs to the UreF family. As to quaternary structure, ureD, UreF and UreG form a complex that acts as a GTP-hydrolysis-dependent molecular chaperone, activating the urease apoprotein by helping to assemble the nickel containing metallocenter of UreC. The UreE protein probably delivers the nickel.

The protein resides in the cytoplasm. Required for maturation of urease via the functional incorporation of the urease nickel metallocenter. This Paraburkholderia phymatum (strain DSM 17167 / CIP 108236 / LMG 21445 / STM815) (Burkholderia phymatum) protein is Urease accessory protein UreF.